A 316-amino-acid polypeptide reads, in one-letter code: Methionyl-tRNA formyltransferase (316 aa).

(6S)-5,6,7,8-tetrahydrofolate is bound at residue 110-113 (SLLP).

This sequence belongs to the Fmt family.

It catalyses the reaction L-methionyl-tRNA(fMet) + (6R)-10-formyltetrahydrofolate = N-formyl-L-methionyl-tRNA(fMet) + (6S)-5,6,7,8-tetrahydrofolate + H(+). Functionally, attaches a formyl group to the free amino group of methionyl-tRNA(fMet). The formyl group appears to play a dual role in the initiator identity of N-formylmethionyl-tRNA by promoting its recognition by IF2 and preventing the misappropriation of this tRNA by the elongation apparatus. The polypeptide is Methionyl-tRNA formyltransferase (Halothermothrix orenii (strain H 168 / OCM 544 / DSM 9562)).